The sequence spans 419 residues: Zinc metalloprotease RasP (419 aa).

4 helical membrane-spanning segments follow: residues 4 to 24, 173 to 193, 349 to 369, and 391 to 411; these read VIAFILIFGTLVFFHELGHLI, IAAGPIMNFILAYVILVMLGL, LAAFLSINLGIVNLLPIPALD, and EAFVVFIGVAFLMLLMLVVTW. H18 contacts Zn(2+). The active site involves E19. H22 serves as a coordination point for Zn(2+). A PDZ domain is found at 184–269; it reads AYVILVMLGL…KLTKYVTPEA (86 aa).

The protein belongs to the peptidase M50B family. The cofactor is Zn(2+).

It localises to the cell membrane. In terms of biological role, is responsible for Site-2 cleavage of the RsiW anti-sigma factor. This results, after a third proteolytic step catalyzed by the ClpXP protease, in the release of SigW and the transcription activation of the genes under the control of the sigma-W factor. This Bacillus licheniformis (strain ATCC 14580 / DSM 13 / JCM 2505 / CCUG 7422 / NBRC 12200 / NCIMB 9375 / NCTC 10341 / NRRL NRS-1264 / Gibson 46) protein is Zinc metalloprotease RasP (rasP).